Here is a 462-residue protein sequence, read N- to C-terminus: NADH-quinone oxidoreductase subunit N 1 (462 aa).

The next 15 membrane-spanning stretches (helical) occupy residues 4–24 (FVVA…VLCL), 32–52 (AGFY…WAVA), 60–80 (IACF…ALLA), 88–108 (FAGD…LLLA), 113–133 (WIML…LIAA), 148–168 (FLPG…IYAA), 178–198 (LAAP…GVGF), 220–240 (VAAF…LHVC), 251–271 (LWPA…LGAV), 279–299 (LLAY…MAVN), 307–327 (LFYL…VGAL), 351–371 (AGVL…AGFV), 374–394 (FLVF…FGII), 416–436 (LIAH…ALGV), and 439–459 (AGLV…AALF).

It belongs to the complex I subunit 2 family. NDH-1 is composed of 14 different subunits. Subunits NuoA, H, J, K, L, M, N constitute the membrane sector of the complex.

Its subcellular location is the cell inner membrane. The enzyme catalyses a quinone + NADH + 5 H(+)(in) = a quinol + NAD(+) + 4 H(+)(out). Its function is as follows. NDH-1 shuttles electrons from NADH, via FMN and iron-sulfur (Fe-S) centers, to quinones in the respiratory chain. The immediate electron acceptor for the enzyme in this species is believed to be ubiquinone. Couples the redox reaction to proton translocation (for every two electrons transferred, four hydrogen ions are translocated across the cytoplasmic membrane), and thus conserves the redox energy in a proton gradient. The protein is NADH-quinone oxidoreductase subunit N 1 of Solidesulfovibrio magneticus (strain ATCC 700980 / DSM 13731 / RS-1) (Desulfovibrio magneticus).